The following is a 221-amino-acid chain: Large ribosomal subunit protein uL4 (221 aa).

A disordered region spans residues 44–102; it reads AARQGTHKVKRRGEVRGGGKKPYRQKGTGRARQGSTRAPQFAGGGVVHGPTPRDYSQRT. Residues 61-72 are compositionally biased toward basic residues; that stretch reads GGKKPYRQKGTG.

This sequence belongs to the universal ribosomal protein uL4 family. As to quaternary structure, part of the 50S ribosomal subunit.

In terms of biological role, one of the primary rRNA binding proteins, this protein initially binds near the 5'-end of the 23S rRNA. It is important during the early stages of 50S assembly. It makes multiple contacts with different domains of the 23S rRNA in the assembled 50S subunit and ribosome. Its function is as follows. Forms part of the polypeptide exit tunnel. This chain is Large ribosomal subunit protein uL4, found in Streptomyces avermitilis (strain ATCC 31267 / DSM 46492 / JCM 5070 / NBRC 14893 / NCIMB 12804 / NRRL 8165 / MA-4680).